The primary structure comprises 161 residues: Cyclic pyranopterin monophosphate synthase (161 aa).

Substrate-binding positions include 75 to 77 (LCH) and 113 to 114 (ME). Asp128 is a catalytic residue.

The protein belongs to the MoaC family. As to quaternary structure, homohexamer; trimer of dimers.

The catalysed reaction is (8S)-3',8-cyclo-7,8-dihydroguanosine 5'-triphosphate = cyclic pyranopterin phosphate + diphosphate. Its pathway is cofactor biosynthesis; molybdopterin biosynthesis. Functionally, catalyzes the conversion of (8S)-3',8-cyclo-7,8-dihydroguanosine 5'-triphosphate to cyclic pyranopterin monophosphate (cPMP). This Thioalkalivibrio sulfidiphilus (strain HL-EbGR7) protein is Cyclic pyranopterin monophosphate synthase.